Here is a 2179-residue protein sequence, read N- to C-terminus: Genome polyprotein (2179 aa).

The short motif at 763 to 765 is the Cell attachment site element; the sequence is RGD. The LRAT domain maps to 786–881; it reads LAYLDRGFYK…IFGSHSLSQH (96 aa). The active-site For protein 2A H-NC is His796. Cys865 (for protein 2A H-NC; Acyl-thioester intermediate) is an active-site residue. One can recognise an SF3 helicase domain in the interval 1156 to 1317; the sequence is FQELARIPNR…KHYSKSGKLN (162 aa). ATP is bound at residue 1184 to 1191; that stretch reads GEPGQGKS. Tyr1493 is modified (O-(5'-phospho-RNA)-tyrosine). A Peptidase C3 domain is found at 1517 to 1707; it reads APYDGQLEHI…IPFNFLKNDM (191 aa). Catalysis depends on for protease 3C activity residues His1557, Asp1595, and Cys1669. Cys1896 serves as the catalytic Acyl-thioester intermediate. Positions 1944-2058 constitute a RdRp catalytic domain; sequence DYNYEMDYSQ…SLDKEIEPER (115 aa). Positions 1950 and 2044 each coordinate Mg(2+).

The protein belongs to the picornaviruses polyprotein family. As to quaternary structure, interacts with capsid protein VP1 and capsid protein VP3 to form heterotrimeric protomers. Five protomers subsequently associate to form pentamers which serve as building blocks for the capsid. Interacts with capsid protein VP0, and capsid protein VP3 to form heterotrimeric protomers. Five protomers subsequently associate to form pentamers which serve as building blocks for the capsid. In terms of assembly, interacts with capsid protein VP0 and capsid protein VP1 to form heterotrimeric protomers. Five protomers subsequently associate to form pentamers which serve as building blocks for the capsid. As to quaternary structure, homohexamer; forms a hexameric ring structure with 6-fold symmetry characteristic of AAA+ ATPases. Homodimer. Interacts with host ACBD3. In terms of assembly, interacts with RNA-directed RNA polymerase. As to quaternary structure, interacts with Viral protein genome-linked. Mg(2+) serves as cofactor. In terms of processing, VPg is uridylylated by the polymerase and is covalently linked to the 5'-end of genomic RNA. This uridylylated form acts as a nucleotide-peptide primer for the polymerase. Post-translationally, specific enzymatic cleavages yield mature proteins. All cleavages are catalyzed by P3C.

The protein localises to the virion. The protein resides in the host cytoplasm. Its subcellular location is the host nucleus. It localises to the host nucleolus. It is found in the host cytoplasmic vesicle membrane. The catalysed reaction is RNA(n) + a ribonucleoside 5'-triphosphate = RNA(n+1) + diphosphate. It carries out the reaction a ribonucleoside 5'-triphosphate + H2O = a ribonucleoside 5'-diphosphate + phosphate + H(+). It catalyses the reaction Selective cleavage of Gln-|-Gly bond in the poliovirus polyprotein. In other picornavirus reactions Glu may be substituted for Gln, and Ser or Thr for Gly.. Forms an icosahedral capsid of pseudo T=3 symmetry together with capsid proteins VP1 and VP3. The capsid is 300 Angstroms in diameter, composed of 60 copies of each capsid protein and enclosing the viral positive strand RNA genome. Capsid proteins interact with host alpha-V/beta-3 integrin heterodimer to provide virion attachment target cell. This attachment induces virion internalization predominantly through clathrin-mediated endocytosis. Binds packaging signals present in the viral RNA. In terms of biological role, forms an icosahedral capsid of pseudo T=3 symmetry together with capsid proteins VP0 and VP1. The capsid is 300 Angstroms in diameter, composed of 60 copies of each capsid protein and enclosing the viral positive strand RNA genome. Capsid proteins interact with host alpha-V/beta-3 integrin heterodimer to provide virion attachment target cell. This attachment induces virion internalization predominantly through clathrin-mediated endocytosis. Binds packaging signals present in the viral RNA. Functionally, forms an icosahedral capsid of pseudo T=3 symmetry together with capsid proteins VP0 and VP3. The capsid is 300 Angstroms in diameter, composed of 60 copies of each capsid protein and enclosing the viral positive strand RNA genome. Capsid proteins interact with host alpha-V/beta-3 integrin heterodimer to provide virion attachment target cell. This attachment induces virion internalization predominantly through clathrin-mediated endocytosis. Binds packaging signals present in the viral RNA. Its function is as follows. Is not a protease. Plays an essential role in the virus replication cycle by acting as a viroporin. Creates a pore in the host endoplasmic reticulum and as a consequence releases Ca2+ in the cytoplasm of infected cell. In turn, high levels of cytoplasmic calcium may trigger membrane trafficking and transport of viral ER-associated proteins to viroplasms, sites of viral genome replication. In terms of biological role, induces and associates with structural rearrangements of intracellular membranes. Displays RNA-binding, nucleotide binding and NTPase activities. May play a role in virion morphogenesis and viral RNA encapsidation by interacting with the capsid protein VP3. Functionally, localizes the viral replication complex to the surface of membranous vesicles. It inhibits host cell endoplasmic reticulum-to-Golgi apparatus transport and causes the disassembly of the Golgi complex, possibly through GBF1 interaction. This would result in depletion of MHC, trail receptors and IFN receptors at the host cell surface. Plays an essential role in viral RNA replication by recruiting ACBD3 and PI4KB at the viral replication sites, thereby allowing the formation of the rearranged membranous structures where viral replication takes place. Its function is as follows. Acts as a primer for viral RNA replication and remains covalently bound to viral genomic RNA. VPg is uridylylated prior to priming replication into VPg-pUpU. The VPg-pUpU is then used as primer on the genomic RNA poly(A) by the RNA-dependent RNA polymerase to replicate the viral genome. Following genome release from the infecting virion in the cytoplasm, the VPg-RNA linkage is probably removed by host TDP2. During the late stage of the replication cycle, host TDP2 is excluded from sites of viral RNA synthesis and encapsidation, allowing for the generation of progeny virions. Cysteine protease that generates mature viral proteins from the precursor polyprotein. In addition to its proteolytic activity, it binds to viral RNA, and thus influences viral genome replication. RNA and substrate bind cooperatively to the protease. In terms of biological role, replicates the viral genomic RNA on the surface of intracellular membranes. Covalently attaches UMP to a tyrosine of VPg, which is used to prime RNA synthesis. The positive stranded RNA genome is first replicated at virus induced membranous vesicles, creating a dsRNA genomic replication form. This dsRNA is then used as template to synthesize positive stranded RNA genomes. ss(+)RNA genomes are either translated, replicated or encapsidated. The protein is Genome polyprotein of Human parechovirus 2 (strain Williamson) (HPeV-2).